Here is a 556-residue protein sequence, read N- to C-terminus: Formate--tetrahydrofolate ligase (556 aa).

65 to 72 serves as a coordination point for ATP; sequence TPAGEGKS.

Belongs to the formate--tetrahydrofolate ligase family.

It carries out the reaction (6S)-5,6,7,8-tetrahydrofolate + formate + ATP = (6R)-10-formyltetrahydrofolate + ADP + phosphate. Its pathway is one-carbon metabolism; tetrahydrofolate interconversion. The sequence is that of Formate--tetrahydrofolate ligase from Clostridium acetobutylicum (strain ATCC 824 / DSM 792 / JCM 1419 / IAM 19013 / LMG 5710 / NBRC 13948 / NRRL B-527 / VKM B-1787 / 2291 / W).